Reading from the N-terminus, the 166-residue chain is Podoplanin (166 aa).

Positions 1–22 are cleaved as a signal peptide; that stretch reads MWTAPVLLWVLGSVWFWDSAQG. The Extracellular segment spans residues 23 to 135; it reads GAIGALEDDL…KKDGLAVVTL (113 aa). Residues threonine 34, threonine 52, threonine 55, and threonine 56 are each glycosylated (O-linked (GalNAc...) threonine). Positions 54–63 are enriched in basic and acidic residues; it reads DTTGELDKST. A disordered region spans residues 54–124; it reads DTTGELDKST…DNAGGETQTT (71 aa). O-linked (GalNAc...) serine glycosylation is present at serine 62. Threonine 63, threonine 71, and threonine 80 each carry an O-linked (GalNAc...) threonine glycan. Serine 81 carries an O-linked (GalNAc...) serine glycan. Threonine 83 carries an O-linked (GalNAc...) threonine glycan. Serine 84 is a glycosylation site (O-linked (GalNAc...) serine). The span at 84 to 93 shows a compositional bias: basic and acidic residues; it reads SDHDHKEHES. Threonine 94, threonine 95, threonine 96, threonine 101, threonine 105, threonine 109, and threonine 110 each carry an O-linked (GalNAc...) threonine glycan. The segment covering 94-103 has biased composition (polar residues); it reads TTTVKAVTSH. Positions 104–114 are enriched in basic and acidic residues; that stretch reads STDKKTTHPNR. A helical transmembrane segment spans residues 136 to 156; the sequence is VGIIIGVLLAIGFIGGIIIVV. The requires for dimerization and lipid rafts association stretch occupies residues 137-141; the sequence is GIIIG. Residues 157–166 are Cytoplasmic-facing; that stretch reads MRKISGRFSP. The interval 158 to 159 is requires for interaction with MSN and EZR; the sequence is RK.

The protein belongs to the podoplanin family. In terms of assembly, homodimer. Interacts with CLEC1B; the interaction is independent of CLEC1B glycosylation and activates CLEC1B; the interaction is dependent of sialic acid on O-glycans. Interacts with CD9; this interaction is homophilic and attenuates platelet aggregation and pulmonary metastasis induced by PDPN. Interacts with LGALS8; the interaction is glycosylation-dependent; may participate in connection of the lymphatic endothelium to the surrounding extracellular matrix. Interacts with HSPA9. Interacts (via extracellular domain) with CD44; this interaction is required for PDPN-mediated directional migration and regulation of lamellipodia extension/stabilization during cell spreading and migration. Interacts (via cytoplasmic domain) with MSN and EZR; activates RHOA and promotes epithelial-mesenchymal transition. Interacts with CCL21; relocalized PDPN to the basolateral membrane. In terms of processing, extensively O-glycosylated. Contains sialic acid residues. O-glycosylation is necessary for platelet aggregation activity. Disialylated at Thr-52; sialic acid is critical for platelet-aggregating activity and for CLEC1B interaction. Post-translationally, the N-terminus is blocked. In adult kidney, expressed on the urinary surface and foot processes of podocytes and in parietal epithelial cells of Bowman's capsule where it is localized to luminal surfaces. In lung, expressed exclusively on luminal surfaces of type I alveolar epithelial cells and pleural mesothelial cells. Not expressed in type II alveolar cells. In bone, expressed in osteocytes and osteoblasts. In spleen, liver, stomach and intestine, expressed in mesoepithelium. Also expressed in thymic epithelial cells, choroid plexus and leptomeninges.

The protein resides in the membrane. The protein localises to the cell projection. Its subcellular location is the lamellipodium membrane. It is found in the filopodium membrane. It localises to the microvillus membrane. The protein resides in the ruffle membrane. The protein localises to the membrane raft. Its subcellular location is the apical cell membrane. It is found in the basolateral cell membrane. It localises to the invadopodium. In terms of biological role, mediates effects on cell migration and adhesion through its different partners. During development plays a role in blood and lymphatic vessels separation by binding CLEC1B, triggering CLEC1B activation in platelets and leading to platelet activation and/or aggregation. Interaction with CD9, on the contrary, attenuates platelet aggregation and pulmonary metastasis induced by PDPN. Mediates effects on cell migration and adhesion through its different partners. Through MSN or EZR interaction promotes epithelial-mesenchymal transition (EMT) leading to ERZ phosphorylation and triggering RHOA activation leading to cell migration increase and invasiveness. Interaction with CD44 promotes directional cell migration in epithelial and tumor cells. In lymph nodes (LNs), controls fibroblastic reticular cells (FRCs) adhesion to the extracellular matrix (ECM) and contraction of the actomyosin by maintaining ERM proteins (EZR; MSN and RDX) and MYL9 activation through association with unknown transmembrane proteins. Engagement of CLEC1B by PDPN promotes FRCs relaxation by blocking lateral membrane interactions leading to reduction of ERM proteins (EZR; MSN and RDX) and MYL9 activation. Through binding with LGALS8 may participate in connection of the lymphatic endothelium to the surrounding extracellular matrix. In keratinocytes, induces changes in cell morphology showing an elongated shape, numerous membrane protrusions, major reorganization of the actin cytoskeleton, increased motility and decreased cell adhesion. Controls invadopodia stability and maturation leading to efficient degradation of the extracellular matrix (ECM) in tumor cells through modulation of RHOC activity in order to activate ROCK1/ROCK2 and LIMK1/LIMK2 and inactivation of CFL1. Required for normal lung cell proliferation and alveolus formation at birth. Does not function as a water channel or as a regulator of aquaporin-type water channels. Does not have any effect on folic acid or amino acid transport. The chain is Podoplanin from Rattus norvegicus (Rat).